We begin with the raw amino-acid sequence, 136 residues long: Histone H3.1/H3.2 (136 aa).

The tract at residues 1-42 (MARTKQTARKSTGGKAPRKQLASKAARKAAPATGGVKKPHRY) is disordered. N6,N6,N6-trimethyllysine; alternate is present on K5. K5 carries the N6,N6-dimethyllysine; alternate modification. N6-methyllysine; alternate occurs at positions 5 and 10. K10 carries the post-translational modification N6-acetyllysine; alternate. S11 carries the phosphoserine modification. Residue K15 is modified to N6,N6-dimethyllysine; alternate. An N6-acetyllysine; alternate mark is found at K15, K19, K24, K28, and K37. An N6-methyllysine; alternate mark is found at K19, K24, K28, and K37. The span at 19-32 (KQLASKAARKAAPA) shows a compositional bias: low complexity. N6,N6,N6-trimethyllysine; alternate occurs at positions 28 and 37. 2 positions are modified to N6,N6-dimethyllysine; alternate: K28 and K37. 2 positions are modified to N6-acetyllysine: K57 and K65. K80 bears the N6,N6,N6-trimethyllysine; alternate mark. K80 carries the post-translational modification N6,N6-dimethyllysine; alternate. K80 carries the N6-methyllysine; alternate modification.

This sequence belongs to the histone H3 family. The nucleosome is a histone octamer containing two molecules each of H2A, H2B, H3 and H4 assembled in one H3-H4 heterotetramer and two H2A-H2B heterodimers. The octamer wraps approximately 147 bp of DNA. In terms of processing, phosphorylated by ark1 to form H3S10ph in a cell cycle-dependent manner during mitosis and meiosis. H3S10ph is also formed by ssp2, promotes subsequent H3K14ac formation by gcn5, and is required for transcriptional activation through TBP recruitment to the promoters. Dephosphorylation is performed by sds21. Post-translationally, mono-, di- and trimethylated by the COMPASS complex to form H3K4me1/2/3. H3K4me activates gene expression by regulating transcription elongation and plays a role in telomere length maintenance. H3K4me enrichment correlates with transcription levels, and occurs in a 5' to 3' gradient with H3K4me3 enrichment at the 5'-end of genes, shifting to H3K4me2 and then H3K4me1. Methylated by clr4 to form H3K9me1. H3K9me1 represents a specific tag for epigenetic transcriptional repression by recruiting swi6/HP1 to methylated histones. Targeting to histone probably involves clr3 and rik1. Essential for silencing of centromeres and directional switching of the mating type. Methylated by set2 to form H3K36me. H3K36me represses gene expression. Methylated by dot1 to form H3K79me. H3K79me is required for association of SIR proteins with telomeric regions and for telomeric silencing. The COMPASS-mediated formation of H3K4me2/3 and the dot1-mediated formation of H3K79me require H2BK123ub1. Acetylation of histone H3 leads to transcriptional activation. H3K14ac formation by gcn5 is promoted by H3S10ph. H3K14ac can also be formed by esa1. H3K56ac formation occurs predominantly in newly synthesized H3 molecules during G1, S and G2/M of the cell cycle and may be involved in DNA repair.

It localises to the nucleus. It is found in the chromosome. Functionally, core component of nucleosome. Nucleosomes wrap and compact DNA into chromatin, limiting DNA accessibility to the cellular machineries which require DNA as a template. Histones thereby play a central role in transcription regulation, DNA repair, DNA replication and chromosomal stability. DNA accessibility is regulated via a complex set of post-translational modifications of histones, also called histone code, and nucleosome remodeling. This Schizosaccharomyces pombe (strain 972 / ATCC 24843) (Fission yeast) protein is Histone H3.1/H3.2 (hht1).